A 389-amino-acid chain; its full sequence is DEAD-box ATP-dependent RNA helicase CshC (389 aa).

Residues 1-26 (MIKDMQPFLQQAWEKAGFKELTEIQK) carry the Q motif motif. One can recognise a Helicase ATP-binding domain in the interval 29–199 (IPTILEGQDV…RDLAVEPQLV (171 aa)). 42 to 49 (SPTGTGKT) serves as a coordination point for ATP. The DEAD box motif lies at 147–150 (DEFD). The region spanning 209–379 (LVEHTYIICE…TKPKAPKKKK (171 aa)) is the Helicase C-terminal domain. The tract at residues 368 to 389 (VETKPKAPKKKKPAFTGKKKPR) is disordered. Residues 373–389 (KAPKKKKPAFTGKKKPR) are compositionally biased toward basic residues.

It carries out the reaction ATP + H2O = ADP + phosphate + H(+). In terms of biological role, DEAD-box RNA helicase. Probably has an RNA-dependent ATPase activity and a 3' to 5' RNA helicase activity that uses the energy of ATP hydrolysis to destabilize and unwind short RNA duplexes. The polypeptide is DEAD-box ATP-dependent RNA helicase CshC (cshC) (Bacillus cereus (strain ATCC 14579 / DSM 31 / CCUG 7414 / JCM 2152 / NBRC 15305 / NCIMB 9373 / NCTC 2599 / NRRL B-3711)).